Consider the following 1101-residue polypeptide: MSNSKVRIYELSKELNLDNKDILEICDQLNIAVKSHSSTITESQAERIKAKAEKLNHQMAGKIHSGSGIDRGQNLAKERKQEILAIHHKPNRPFSSTDAPVGSGQSSPLIEPPRPPMKPQPPSPSRSEVTSPITDEPVSTQEDTNGSSSSHEREPQSPMSPFDQQQPEQNTTDHNQEQQNQLKYNQEQSNQLEQESAISSELSEVNVSKLLRPPVRPSEKPASVPSPSKEKEAKSNEPTKAQPIISPKENKSHSKENKLKLPSDIKPKPNKDKDRDGKKPDKEKDKKSLSPQPKVKRESREQREPRESREQREPRESREQREPRESREQREPKLSTELKRPTPPKPPQKPKQAEVAALAIEPEDVEDTAEDLLEEDPLEALTQKPKLKRPTPPKVGKRQNWDEEEEETEEGKGKAGKAAKAGKNKRRQLLLEDEDDFDSDLEEILEIPTAVSISTARPPKPKSMKPAASGNGASKNVKAPTKAEPGRGKSAERERSERKDRKEQPQRAETLVLDKTMTVRELAERLGIAETEIIRILFFKGIAVNITQTLDFDTIQAIAEELEVQIESPEVKAAATKTTEMLDANDLENLHRRPPVVTIMGHVDHGKTTLLDSIRKTKVAQGEAGGITQHIGAYHVDIEHEGKQEQIVFLDTPGHEAFTAMRARGARVTDIAILVVAADDGVQPQTREAISHARAAEVPIVVAINKIDKPESNPDRIKQELSELSLVPEEWGGETIMVPVSALKGENLDTLLEMLLLVAEVGELSANPDRLARGTVIEANLDRTRGPVATLLVQNGTLRVGDTIVAGPVLGKIRAMIDDRGNKVEEASPSFAVEILGLNEVPAAGDEFEVFENEKEARALADQRSQDLRQTRLQQAMSSRRISLSTLSAQAQEGKLKELNLILKADVQGSVEAILGSLKQLPQNEVQIRVLLAAPGEITETDVDLAAASGAVIVGFNTTLASGARQSADQEGIDIREYNIIYKLLDDIQGAMEGLLDPEEVESPLGVAEVRAVFPVGRGAVAGCYVQSGKIIRNRQLRVRRKGEVIYEGVLDSLKRMKEDAREVNAGYECGIGVSKFNDWQEGDSIEVFEMVMKRRTLSTK.

Disordered stretches follow at residues 81-437 and 452-509; these read QEIL…EDDF and SIST…QRAE. Residues 93-108 show a composition bias toward polar residues; the sequence is PFSSTDAPVGSGQSSP. A compositionally biased stretch (pro residues) spans 110-124; sequence IEPPRPPMKPQPPSP. Composition is skewed to polar residues over residues 128–149 and 157–184; these read EVTS…GSSS and SPMS…QLKY. Residues 185–196 show a composition bias toward low complexity; that stretch reads NQEQSNQLEQES. Polar residues predominate over residues 197–206; that stretch reads AISSELSEVN. 3 stretches are compositionally biased toward basic and acidic residues: residues 228–237, 248–288, and 295–340; these read SKEKEAKSNE, KENK…DKKS, and VKRE…ELKR. Over residues 361–378 the composition is skewed to acidic residues; it reads EPEDVEDTAEDLLEEDPL. Composition is skewed to basic residues over residues 385–397 and 414–428; these read PKLK…KVGK and KAGK…KRRQ. Over residues 484–506 the composition is skewed to basic and acidic residues; that stretch reads EPGRGKSAERERSERKDRKEQPQ. The tr-type G domain maps to 592-765; it reads RRPPVVTIMG…LLVAEVGELS (174 aa). The G1 stretch occupies residues 601-608; the sequence is GHVDHGKT. 601-608 provides a ligand contact to GTP; that stretch reads GHVDHGKT. The segment at 626–630 is G2; that stretch reads GITQH. Residues 651–654 are G3; the sequence is DTPG. GTP contacts are provided by residues 651–655 and 705–708; these read DTPGH and NKID. A G4 region spans residues 705 to 708; sequence NKID. Residues 741–743 are G5; that stretch reads SAL.

This sequence belongs to the TRAFAC class translation factor GTPase superfamily. Classic translation factor GTPase family. IF-2 subfamily.

The protein localises to the cytoplasm. In terms of biological role, one of the essential components for the initiation of protein synthesis. Protects formylmethionyl-tRNA from spontaneous hydrolysis and promotes its binding to the 30S ribosomal subunits. Also involved in the hydrolysis of GTP during the formation of the 70S ribosomal complex. The sequence is that of Translation initiation factor IF-2 from Gloeothece citriformis (strain PCC 7424) (Cyanothece sp. (strain PCC 7424)).